The sequence spans 710 residues: Dynein axonemal assembly factor 3 homolog (710 aa).

Residues 403-487 (GAEAGAGAGP…DSDPAAAAST (85 aa)) form a disordered region. Positions 404–416 (AEAGAGAGPGGEA) are enriched in gly residues. Low complexity predominate over residues 417–438 (AAGASSSSGKEEAAAAAAAGKE). Gly residues predominate over residues 453–462 (SGSGAPGAGT). Residues 478–487 (DSDPAAAAST) show a composition bias toward low complexity.

This sequence belongs to the DNAAF3 family.

The protein localises to the cytoplasm. Required for the assembly of axonemal inner and outer dynein arms. Involved in preassembly of dyneins into complexes before their transport into cilia. The polypeptide is Dynein axonemal assembly factor 3 homolog (DAB1) (Chlamydomonas reinhardtii (Chlamydomonas smithii)).